The sequence spans 252 residues: JmjC domain-containing protein A (252 aa).

Residues 103-252 form the JmjC domain; sequence PYLRNFGMLD…VSCWGKEMIM (150 aa).

This Dictyostelium discoideum (Social amoeba) protein is JmjC domain-containing protein A (jcdA).